We begin with the raw amino-acid sequence, 697 residues long: Long-chain-fatty-acid--CoA ligase 6 (697 aa).

A helical; Signal-anchor for type III membrane protein membrane pass occupies residues 25-45 (LSATTLVSVGALAAVLAYWLT). The Cytoplasmic portion of the chain corresponds to 46 to 697 (HRPKALQPPC…QIEELYLVSV (652 aa)).

Belongs to the ATP-dependent AMP-binding enzyme family. It depends on Mg(2+) as a cofactor.

It localises to the mitochondrion outer membrane. Its subcellular location is the peroxisome membrane. The protein resides in the microsome membrane. It is found in the endoplasmic reticulum membrane. The enzyme catalyses a long-chain fatty acid + ATP + CoA = a long-chain fatty acyl-CoA + AMP + diphosphate. The catalysed reaction is (5Z,8Z,11Z,14Z)-eicosatetraenoate + ATP + CoA = (5Z,8Z,11Z,14Z)-eicosatetraenoyl-CoA + AMP + diphosphate. It catalyses the reaction 15-hydroxy-(5Z,8Z,11Z,13E)-eicosatetraenoate + ATP + CoA = 15-hydroxy-(5Z,8Z,11Z,13E)-eicosatetraenoyl-CoA + AMP + diphosphate. It carries out the reaction 12-hydroxy-(5Z,8Z,10E,14Z)-eicosatetraenoate + ATP + CoA = 12-hydroxy-(5Z,8Z,10E,14Z)-eicosatetraenoyl-CoA + AMP + diphosphate. The enzyme catalyses 5-hydroxy-(6E,8Z,11Z,14Z)-eicosatetraenoate + ATP + CoA = 5-hydroxy-(6E,8Z,11Z,14Z)-eicosatetraenoyl-CoA + AMP + diphosphate. The catalysed reaction is hexadecanoate + ATP + CoA = hexadecanoyl-CoA + AMP + diphosphate. It catalyses the reaction (E)-hexadec-2-enoate + ATP + CoA = (2E)-hexadecenoyl-CoA + AMP + diphosphate. In terms of biological role, catalyzes the conversion of long-chain fatty acids to their active form acyl-CoA for both synthesis of cellular lipids, and degradation via beta-oxidation. Plays an important role in fatty acid metabolism in brain and the acyl-CoAs produced may be utilized exclusively for the synthesis of the brain lipid. The sequence is that of Long-chain-fatty-acid--CoA ligase 6 (Acsl6) from Mus musculus (Mouse).